Consider the following 184-residue polypeptide: Oligoribonuclease (184 aa).

An Exonuclease domain is found at 7 to 170; that stretch reads LIWIDLEMTG…DDIRESVAEL (164 aa). Tyrosine 128 is an active-site residue.

Belongs to the oligoribonuclease family.

It localises to the cytoplasm. 3'-to-5' exoribonuclease specific for small oligoribonucleotides. In Baumannia cicadellinicola subsp. Homalodisca coagulata, this protein is Oligoribonuclease.